The sequence spans 94 residues: Large ribosomal subunit protein bL25 (94 aa).

The protein belongs to the bacterial ribosomal protein bL25 family. Part of the 50S ribosomal subunit; part of the 5S rRNA/L5/L18/L25 subcomplex. Contacts the 5S rRNA. Binds to the 5S rRNA independently of L5 and L18.

This is one of the proteins that binds to the 5S RNA in the ribosome where it forms part of the central protuberance. The polypeptide is Large ribosomal subunit protein bL25 (Citrobacter koseri (strain ATCC BAA-895 / CDC 4225-83 / SGSC4696)).